Here is a 918-residue protein sequence, read N- to C-terminus: Translation initiation factor IF-2 (918 aa).

Residues 39-321 form a disordered region; it reads DDASEKHLRN…KRDGRMKETT (283 aa). Residues 95-146 are compositionally biased toward low complexity; sequence KSSNNESTTRNNNNNKNGNQNRNNTNGRPNNNQNRPNNNRNQNNNRNGNRPN. A compositionally biased stretch (basic and acidic residues) spans 148–158; that stretch reads PKRDEKQDRIR. Residues 159-174 are compositionally biased toward low complexity; sequence ASVAEAARMAAQANRE. Residues 180 to 190 are compositionally biased toward polar residues; it reads PQANRQRTNSA. Composition is skewed to low complexity over residues 201 to 231, 237 to 267, and 278 to 296; these read NNQN…NNRN, SRPN…TANN, and GRNN…QNRP. A compositionally biased stretch (basic residues) spans 302–313; sequence RKNKKRNRKAKR. In terms of domain architecture, tr-type G spans 419 to 588; that stretch reads SRPPVVTIMG…LLQAEVLELK (170 aa). The segment at 428 to 435 is G1; sequence GHVDHGKT. 428 to 435 is a GTP binding site; the sequence is GHVDHGKT. The segment at 453–457 is G2; that stretch reads GITQG. Positions 474–477 are G3; that stretch reads DTPG. Residues 474-478 and 528-531 contribute to the GTP site; these read DTPGH and NKID. The G4 stretch occupies residues 528–531; sequence NKID. A G5 region spans residues 564-566; it reads SAK.

This sequence belongs to the TRAFAC class translation factor GTPase superfamily. Classic translation factor GTPase family. IF-2 subfamily.

It is found in the cytoplasm. In terms of biological role, one of the essential components for the initiation of protein synthesis. Protects formylmethionyl-tRNA from spontaneous hydrolysis and promotes its binding to the 30S ribosomal subunits. Also involved in the hydrolysis of GTP during the formation of the 70S ribosomal complex. The protein is Translation initiation factor IF-2 of Pediococcus pentosaceus (strain ATCC 25745 / CCUG 21536 / LMG 10740 / 183-1w).